We begin with the raw amino-acid sequence, 337 residues long: Glyceraldehyde-3-phosphate dehydrogenase (337 aa).

Residues 12-13, Asp34, and Lys79 contribute to the NAD(+) site; that span reads RI. D-glyceraldehyde 3-phosphate-binding positions include 150–152, Thr181, 210–211, and Arg233; these read SCT and TG. Catalysis depends on Cys151, which acts as the Nucleophile. Asn315 is an NAD(+) binding site.

It belongs to the glyceraldehyde-3-phosphate dehydrogenase family. In terms of assembly, homotetramer.

Its subcellular location is the cytoplasm. The enzyme catalyses D-glyceraldehyde 3-phosphate + phosphate + NAD(+) = (2R)-3-phospho-glyceroyl phosphate + NADH + H(+). The protein operates within carbohydrate degradation; glycolysis; pyruvate from D-glyceraldehyde 3-phosphate: step 1/5. The chain is Glyceraldehyde-3-phosphate dehydrogenase (GPD) from Cochliobolus lunatus (Filamentous fungus).